The chain runs to 438 residues: Enolase (438 aa).

The substrate site is built by H159 and E168. E211 (proton donor) is an active-site residue. 3 residues coordinate Mg(2+): D246, E297, and D322. Positions 297 and 322 each coordinate substrate. K347 serves as the catalytic Proton acceptor. Residues 374–377 (SHRS) and K398 each bind substrate.

The protein belongs to the enolase family. Homodimer. Mg(2+) serves as cofactor.

The protein localises to the cytoplasm. The enzyme catalyses (2R)-2-phosphoglycerate = phosphoenolpyruvate + H2O. Its pathway is carbohydrate degradation; glycolysis; pyruvate from D-glyceraldehyde 3-phosphate: step 4/5. This Penicillium chrysogenum (Penicillium notatum) protein is Enolase (enoA).